Here is a 125-residue protein sequence, read N- to C-terminus: Small ribosomal subunit protein eS8 (125 aa).

The segment at 1-35 (MQWQGRSVRKPSGGRYHTSQGKKRTEIGRAPAETH) is disordered.

It belongs to the eukaryotic ribosomal protein eS8 family. In terms of assembly, part of the 30S ribosomal subunit.

This Methanoculleus marisnigri (strain ATCC 35101 / DSM 1498 / JR1) protein is Small ribosomal subunit protein eS8.